We begin with the raw amino-acid sequence, 871 residues long: Coatomer subunit gamma-2 (871 aa).

Over residues 1–11 (MIKKFDKKDEE) the composition is skewed to basic and acidic residues. Residues 1–21 (MIKKFDKKDEESGSGSNPFQH) are disordered. 6 HEAT repeats span residues 64 to 101 (TEAT…ISED), 283 to 320 (RELA…KHPS), 321 to 355 (AVTA…GSES), 356 to 392 (SVDR…KYPR), 395 to 430 (SVMM…ENPE), and 467 to 504 (PVPS…QNES). A Phosphothreonine modification is found at T594.

Belongs to the COPG family. In terms of assembly, oligomeric complex. Binds to CDC42. Interacts with JAGN1. Interacts with TMED10 (via cytoplasmic domain).

The protein localises to the cytoplasm. It is found in the cytosol. Its subcellular location is the golgi apparatus membrane. The protein resides in the cytoplasmic vesicle. It localises to the COPI-coated vesicle membrane. In terms of biological role, the coatomer is a cytosolic protein complex that binds to dilysine motifs and reversibly associates with Golgi non-clathrin-coated vesicles, which further mediate biosynthetic protein transport from the ER, via the Golgi up to the trans Golgi network. Coatomer complex is required for budding from Golgi membranes, and is essential for the retrograde Golgi-to-ER transport of dilysine-tagged proteins. In mammals, the coatomer can only be recruited by membranes associated to ADP-ribosylation factors (ARFs), which are small GTP-binding proteins; the complex also influences the Golgi structural integrity, as well as the processing, activity, and endocytic recycling of LDL receptors. This chain is Coatomer subunit gamma-2 (COPG2), found in Homo sapiens (Human).